A 150-amino-acid polypeptide reads, in one-letter code: uncharacterized protein (150 aa).

Residues 1–19 show a composition bias toward low complexity; it reads MNDDSSSSSSGDSSDGSSG. Disordered stretches follow at residues 1–21 and 85–131; these read MNDD…SGTT and EPEA…AYPE. The span at 106 to 115 shows a compositional bias: pro residues; it reads RPPPTEPPTV.

This is an uncharacterized protein from Schizosaccharomyces pombe (strain 972 / ATCC 24843) (Fission yeast).